The primary structure comprises 795 residues: Phenylalanine--tRNA ligase beta subunit (795 aa).

Positions 39–148 (AGSFHGVVVG…ADAPIGTDIR (110 aa)) constitute a tRNA-binding domain. Positions 401–476 (PKRATITLRR…RVYGYNNIPD (76 aa)) constitute a B5 domain. Mg(2+) is bound by residues D454, D460, E463, and E464. Residues 701–794 (SRFPANRRDI…LKERFQASLR (94 aa)) form the FDX-ACB domain.

The protein belongs to the phenylalanyl-tRNA synthetase beta subunit family. Type 1 subfamily. As to quaternary structure, tetramer of two alpha and two beta subunits. Requires Mg(2+) as cofactor.

Its subcellular location is the cytoplasm. It catalyses the reaction tRNA(Phe) + L-phenylalanine + ATP = L-phenylalanyl-tRNA(Phe) + AMP + diphosphate + H(+). In Shigella flexneri, this protein is Phenylalanine--tRNA ligase beta subunit.